A 338-amino-acid polypeptide reads, in one-letter code: Ketol-acid reductoisomerase (NADP(+)) (338 aa).

The KARI N-terminal Rossmann domain occupies 1 to 181 (MKVFYDNDAD…GGTRAGVIET (181 aa)). Residues 24-27 (YGSQ), Arg-47, Ser-50, Ser-52, and 82-85 (DEGQ) each bind NADP(+). His-107 is an active-site residue. Residue Gly-133 participates in NADP(+) binding. A KARI C-terminal knotted domain is found at 182–327 (SFREETETDL…SKLRSMMTWI (146 aa)). Asp-190, Glu-194, Glu-226, and Glu-230 together coordinate Mg(2+). Ser-251 is a binding site for substrate.

The protein belongs to the ketol-acid reductoisomerase family. Mg(2+) serves as cofactor.

The catalysed reaction is (2R)-2,3-dihydroxy-3-methylbutanoate + NADP(+) = (2S)-2-acetolactate + NADPH + H(+). It carries out the reaction (2R,3R)-2,3-dihydroxy-3-methylpentanoate + NADP(+) = (S)-2-ethyl-2-hydroxy-3-oxobutanoate + NADPH + H(+). Its pathway is amino-acid biosynthesis; L-isoleucine biosynthesis; L-isoleucine from 2-oxobutanoate: step 2/4. The protein operates within amino-acid biosynthesis; L-valine biosynthesis; L-valine from pyruvate: step 2/4. Its function is as follows. Involved in the biosynthesis of branched-chain amino acids (BCAA). Catalyzes an alkyl-migration followed by a ketol-acid reduction of (S)-2-acetolactate (S2AL) to yield (R)-2,3-dihydroxy-isovalerate. In the isomerase reaction, S2AL is rearranged via a Mg-dependent methyl migration to produce 3-hydroxy-3-methyl-2-ketobutyrate (HMKB). In the reductase reaction, this 2-ketoacid undergoes a metal-dependent reduction by NADPH to yield (R)-2,3-dihydroxy-isovalerate. The sequence is that of Ketol-acid reductoisomerase (NADP(+)) from Acidithiobacillus ferrooxidans (strain ATCC 23270 / DSM 14882 / CIP 104768 / NCIMB 8455) (Ferrobacillus ferrooxidans (strain ATCC 23270)).